We begin with the raw amino-acid sequence, 306 residues long: uncharacterized protein (306 aa).

Asp204 serves as the catalytic Proton acceptor.

It belongs to the aminoglycoside phosphotransferase family.

This is an uncharacterized protein from Bacillus subtilis (strain 168).